The sequence spans 523 residues: Cytochrome P450 monooxygenase ple5B (523 aa).

Residues 16-33 (IAAAAAGSAVAVYKLLQL) traverse the membrane as a helical segment. N-linked (GlcNAc...) asparagine glycosylation is found at N82, N103, N122, N295, N379, and N423. Residue C446 participates in heme binding.

It belongs to the cytochrome P450 family. It depends on heme as a cofactor.

It is found in the membrane. It functions in the pathway secondary metabolite biosynthesis; terpenoid biosynthesis. Functionally, cytochrome P450 monooxygenase; part of the gene cluster that mediates the biosynthesis of pleuromutilin, a tricyclic diterpene showing antibacterial properties. The geranylgeranyl diphosphate (GGPP) synthase ple4 catalyzes the first step in pleuromutilin biosynthesis. GGPP is then substrate of the premutilin synthase (PS) ple3 to yield premutilin. Premutilin synthase is a bifunctional enzyme composed of the fusion of a class II diterpene cyclase (DTC) and a class I diterpene synthase (DTS), with the corresponding domains and active sites containing characteristic aspartate-rich motifs. GGPP is first converted to mutildienyl-diphosphate (MPP) at the class II DTC site. MPP is subsequently further cyclized at the class I DTS site, followed by a 1,5-hydride shift and addition of water prior to terminating deprotonation, to yield premutilin. The cytochrome P450 monooxygenases ple5 and ple6 hydroxylate premutilin at C-11 and C-3, respectively, producing 11-hydroxypremutilin and 3-hydroxypremutilin. The combination of the actions of both ple5 and ple6 leads to the production of 3,11-dihydroxypremutilin. The short chain dehydrogenase ple7 further converts 3,11-dihydroxypremutilin into mutilin. The acetyltransferase ple2 then acetylates mutilin to produce 14-O-acetylmutilin. Finally, the cytochrome P450 monooxygenase ple1 catalyzes hydroxylation on the alpha position of the acetyl side chain of 14-O-acetylmutilin to yield pleuromutilin. The sequence is that of Cytochrome P450 monooxygenase ple5B from Rhodocybe pseudopiperita (Clitopilus pseudopiperitus).